We begin with the raw amino-acid sequence, 515 residues long: Maturase K (515 aa).

The protein belongs to the intron maturase 2 family. MatK subfamily.

The protein localises to the plastid. The protein resides in the chloroplast. Its function is as follows. Usually encoded in the trnK tRNA gene intron. Probably assists in splicing its own and other chloroplast group II introns. This is Maturase K from Cedrus atlantica (Atlas cedar).